Consider the following 188-residue polypeptide: GTP cyclohydrolase 1 (188 aa).

Residues Cys-76, His-79, and Cys-148 each contribute to the Zn(2+) site.

It belongs to the GTP cyclohydrolase I family. Toroid-shaped homodecamer, composed of two pentamers of five dimers.

It carries out the reaction GTP + H2O = 7,8-dihydroneopterin 3'-triphosphate + formate + H(+). The protein operates within cofactor biosynthesis; 7,8-dihydroneopterin triphosphate biosynthesis; 7,8-dihydroneopterin triphosphate from GTP: step 1/1. In Caldanaerobacter subterraneus subsp. tengcongensis (strain DSM 15242 / JCM 11007 / NBRC 100824 / MB4) (Thermoanaerobacter tengcongensis), this protein is GTP cyclohydrolase 1.